The primary structure comprises 258 residues: Ribosomal RNA large subunit methyltransferase E (258 aa).

Positions 58, 60, 78, 96, and 120 each coordinate S-adenosyl-L-methionine. The Proton acceptor role is filled by Lys160.

It belongs to the class I-like SAM-binding methyltransferase superfamily. RNA methyltransferase RlmE family.

The protein localises to the cytoplasm. It carries out the reaction uridine(2552) in 23S rRNA + S-adenosyl-L-methionine = 2'-O-methyluridine(2552) in 23S rRNA + S-adenosyl-L-homocysteine + H(+). Its function is as follows. Specifically methylates the uridine in position 2552 of 23S rRNA at the 2'-O position of the ribose in the fully assembled 50S ribosomal subunit. This is Ribosomal RNA large subunit methyltransferase E from Methanococcus maripaludis (strain C7 / ATCC BAA-1331).